The following is a 159-amino-acid chain: ATP synthase subunit b 2 (159 aa).

A helical membrane pass occupies residues 1-21; the sequence is MDATFWAFIALVIFVAIVVYM.

This sequence belongs to the ATPase B chain family. In terms of assembly, F-type ATPases have 2 components, F(1) - the catalytic core - and F(0) - the membrane proton channel. F(1) has five subunits: alpha(3), beta(3), gamma(1), delta(1), epsilon(1). F(0) has three main subunits: a(1), b(2) and c(10-14). The alpha and beta chains form an alternating ring which encloses part of the gamma chain. F(1) is attached to F(0) by a central stalk formed by the gamma and epsilon chains, while a peripheral stalk is formed by the delta and b chains.

It is found in the cell inner membrane. In terms of biological role, f(1)F(0) ATP synthase produces ATP from ADP in the presence of a proton or sodium gradient. F-type ATPases consist of two structural domains, F(1) containing the extramembraneous catalytic core and F(0) containing the membrane proton channel, linked together by a central stalk and a peripheral stalk. During catalysis, ATP synthesis in the catalytic domain of F(1) is coupled via a rotary mechanism of the central stalk subunits to proton translocation. Functionally, component of the F(0) channel, it forms part of the peripheral stalk, linking F(1) to F(0). The chain is ATP synthase subunit b 2 from Brucella ovis (strain ATCC 25840 / 63/290 / NCTC 10512).